A 378-amino-acid chain; its full sequence is D-galactarolactone cycloisomerase (378 aa).

Residues Asp-194, Glu-220, and Glu-246 each coordinate Mg(2+). The active-site Proton acceptor is the His-296.

This sequence belongs to the mandelate racemase/muconate lactonizing enzyme family. Homooctamer. The cofactor is Mg(2+).

It catalyses the reaction D-glucaro-1,4-lactone = 5-dehydro-4-deoxy-D-glucarate + H(+). It carries out the reaction D-galactaro-1,4-lactone = 5-dehydro-4-deoxy-D-glucarate + H(+). The protein operates within carbohydrate acid metabolism; D-galacturonate degradation via prokaryotic oxidative pathway. Its function is as follows. Catalyzes the ring opening of D-galactaro-1,4-lactone to yield 5-keto-4-deoxy-D-glucarate (KDG) via a beta-elimination reaction. This is a step in the oxidative degradation pathway of D-galacturonate, which allows A.tumefaciens to utilize D-galacturonate as a sole carbon source. To a lesser extent, can also use D-glucaro-1,4-lactone as substrate to produce KDG, but cannot use D-galactaro-1,5-lactone, D-glucaro-6,3-lactone and linear D-glucarate. The polypeptide is D-galactarolactone cycloisomerase (gci) (Agrobacterium fabrum (strain C58 / ATCC 33970) (Agrobacterium tumefaciens (strain C58))).